A 529-amino-acid polypeptide reads, in one-letter code: Acid-sensing ion channel 1C (529 aa).

At 1–51 (MTAMKGDSEDSIESMRPSNLQVFANNSTLHGMSHIFAYGHMTFRRFLWTLS) the chain is on the cytoplasmic side. A helical membrane pass occupies residues 52–68 (FMGSLGLLMYVCMDRVY). Residues 69-427 (YYFEFPHVTK…EKIEQKKAYE (359 aa)) are Extracellular-facing. Asparagine 86, asparagine 155, and asparagine 161 each carry an N-linked (GlcNAc...) asparagine glycan. Disulfide bonds link cysteine 95/cysteine 196, cysteine 174/cysteine 181, cysteine 292/cysteine 367, cysteine 310/cysteine 363, cysteine 314/cysteine 361, cysteine 323/cysteine 345, and cysteine 325/cysteine 337. Asparagine 185 carries an N-linked (GlcNAc...) asparagine glycan. 2 N-linked (GlcNAc...) asparagine glycosylation sites follow: asparagine 368 and asparagine 395. A discontinuously helical membrane pass occupies residues 428-458 (VAGLLGDIGGQMGLFIGASVLTILEIFDYLY). Residues 444–446 (GAS) carry the GAS motif; ion selectivity filter motif. Residues 459 to 529 (EVLKDKILGS…PFVVGSNSGK (71 aa)) lie on the Cytoplasmic side of the membrane.

This sequence belongs to the amiloride-sensitive sodium channel (TC 1.A.6) family. ASIC1 subfamily. In terms of assembly, homotrimer. Heterotrimer; with other ASIC proteins producing channel with different properties. Interacts with asic1a. Expressed in central nervous system.

It is found in the cell membrane. The protein resides in the postsynaptic cell membrane. It localises to the cell projection. The protein localises to the dendrite. The enzyme catalyses Na(+)(in) = Na(+)(out). It carries out the reaction K(+)(in) = K(+)(out). The catalysed reaction is Li(+)(in) = Li(+)(out). It catalyses the reaction Ca(2+)(in) = Ca(2+)(out). Inhibited by the diuretic drug amiloride. Functionally, forms voltage-independent, pH-gated trimeric sodium channels that act as postsynaptic excitatory receptors in the nervous system, playing a crucial role in regulating synaptic plasticity, learning, and memory. Upon extracellular pH drop this channel elicits transient, fast activating, and completely desensitizing inward currents. Displays high selectivity for sodium ions but can also permit the permeation of other cations. This is Acid-sensing ion channel 1C from Danio rerio (Zebrafish).